A 929-amino-acid chain; its full sequence is LPS-assembly protein LptD (929 aa).

Residues 1-24 (MKLRFIRSAGWLFLLFCLACNARA) form the signal peptide. The interval 26–208 (LPPLSSKPEQ…EAGDEKLRLA (183 aa)) is disordered. Residues 44–74 (GDDKPVVIDTERIRGHHEYESGTRSESELRS) show a composition bias toward basic and acidic residues. A compositionally biased stretch (polar residues) spans 154 to 164 (RTQSAPRTLSA). A compositionally biased stretch (basic and acidic residues) spans 181–208 (DQDRPGFAEGERIGGHREEAGDEKLRLA).

Belongs to the LptD family. Component of the lipopolysaccharide transport and assembly complex. Interacts with LptE and LptA.

The protein localises to the cell outer membrane. Together with LptE, is involved in the assembly of lipopolysaccharide (LPS) at the surface of the outer membrane. The protein is LPS-assembly protein LptD of Nitrosospira multiformis (strain ATCC 25196 / NCIMB 11849 / C 71).